The chain runs to 126 residues: MPKDYSRTLRIADQIQRELADLIRNELKDPRIGMITLTGVEVSQDYAHAKVFYTTLHNESDNFLVQNGLENAAGFLRTQLLHRLKLRVIPQLHFIYDESIERGVRLSQLIDEAVASDRSEKETDST.

This sequence belongs to the RbfA family. As to quaternary structure, monomer. Binds 30S ribosomal subunits, but not 50S ribosomal subunits or 70S ribosomes.

Its subcellular location is the cytoplasm. Its function is as follows. One of several proteins that assist in the late maturation steps of the functional core of the 30S ribosomal subunit. Associates with free 30S ribosomal subunits (but not with 30S subunits that are part of 70S ribosomes or polysomes). Required for efficient processing of 16S rRNA. May interact with the 5'-terminal helix region of 16S rRNA. In Nitrosospira multiformis (strain ATCC 25196 / NCIMB 11849 / C 71), this protein is Ribosome-binding factor A.